The chain runs to 248 residues: Granzyme F (248 aa).

The signal sequence occupies residues 1 to 18 (MPPILILLTLLLPLRAGA). Residues 19-20 (EE) constitute a propeptide that is removed on maturation. Residues 21-246 (IIGGHEVKPH…YLPWISRNMK (226 aa)) form the Peptidase S1 domain. Cysteines 50 and 66 form a disulfide. The active-site Charge relay system is H65. N106 carries an N-linked (GlcNAc...) asparagine glycan. Residue D109 is the Charge relay system of the active site. 2 disulfide bridges follow: C143–C210 and C175–C189. Residue N154 is glycosylated (N-linked (GlcNAc...) asparagine). S204 (charge relay system) is an active-site residue. N223 carries N-linked (GlcNAc...) asparagine glycosylation.

This sequence belongs to the peptidase S1 family. Granzyme subfamily.

It is found in the cytolytic granule. This enzyme is probably necessary for target cell lysis in cell-mediated immune responses. The chain is Granzyme F (Gzmf) from Mus musculus (Mouse).